We begin with the raw amino-acid sequence, 495 residues long: GTPase Der (495 aa).

EngA-type G domains are found at residues 3-166 (PVVA…VQDE) and 208-381 (IKLA…SCAT). Residues 9-16 (GRPNVGKS), 56-60 (DTGGI), 118-121 (NKTD), 214-221 (GRPNVGKS), 261-265 (DTAGV), and 326-329 (NKWD) each bind GTP. The 85-residue stretch at 382–466 (RRVSTAMLTR…PIRIQFKEGE (85 aa)) folds into the KH-like domain.

Belongs to the TRAFAC class TrmE-Era-EngA-EngB-Septin-like GTPase superfamily. EngA (Der) GTPase family. Associates with the 50S ribosomal subunit.

Functionally, GTPase that plays an essential role in the late steps of ribosome biogenesis. This is GTPase Der from Pectobacterium atrosepticum (strain SCRI 1043 / ATCC BAA-672) (Erwinia carotovora subsp. atroseptica).